Consider the following 195-residue polypeptide: Phosphoribosylglycinamide formyltransferase (195 aa).

A N(1)-(5-phospho-beta-D-ribosyl)glycinamide-binding site is contributed by 12–14; it reads GSN. (6R)-10-formyltetrahydrofolate-binding positions include lysine 65, 90 to 93, and asparagine 107; that span reads MRLI. Histidine 109 (proton donor) is an active-site residue.

The protein belongs to the GART family.

It catalyses the reaction N(1)-(5-phospho-beta-D-ribosyl)glycinamide + (6R)-10-formyltetrahydrofolate = N(2)-formyl-N(1)-(5-phospho-beta-D-ribosyl)glycinamide + (6S)-5,6,7,8-tetrahydrofolate + H(+). The protein operates within purine metabolism; IMP biosynthesis via de novo pathway; N(2)-formyl-N(1)-(5-phospho-D-ribosyl)glycinamide from N(1)-(5-phospho-D-ribosyl)glycinamide (10-formyl THF route): step 1/1. Its function is as follows. Catalyzes the transfer of a formyl group from 10-formyltetrahydrofolate to 5-phospho-ribosyl-glycinamide (GAR), producing 5-phospho-ribosyl-N-formylglycinamide (FGAR) and tetrahydrofolate. This is Phosphoribosylglycinamide formyltransferase from Bacillus subtilis (strain 168).